A 393-amino-acid chain; its full sequence is Flavohemoprotein (393 aa).

The Globin domain occupies Met1–Glu139. His85 contributes to the heme b binding site. Residues Tyr95 and Glu138 each act as charge relay system in the active site. Positions Gly150–Ala393 are reductase. Residues Arg153–Arg256 enclose the FAD-binding FR-type domain. FAD contacts are provided by residues Tyr191 and Arg205–Ser208. Position 268 to 273 (Gly268 to Pro273) interacts with NADP(+). Phe384 to Pro387 lines the FAD pocket.

The protein belongs to the globin family. Two-domain flavohemoproteins subfamily. This sequence in the C-terminal section; belongs to the flavoprotein pyridine nucleotide cytochrome reductase family. It depends on heme b as a cofactor. The cofactor is FAD.

The catalysed reaction is 2 nitric oxide + NADPH + 2 O2 = 2 nitrate + NADP(+) + H(+). The enzyme catalyses 2 nitric oxide + NADH + 2 O2 = 2 nitrate + NAD(+) + H(+). Functionally, is involved in NO detoxification in an aerobic process, termed nitric oxide dioxygenase (NOD) reaction that utilizes O(2) and NAD(P)H to convert NO to nitrate, which protects the bacterium from various noxious nitrogen compounds. Therefore, plays a central role in the inducible response to nitrosative stress. This is Flavohemoprotein from Pseudomonas aeruginosa (strain ATCC 15692 / DSM 22644 / CIP 104116 / JCM 14847 / LMG 12228 / 1C / PRS 101 / PAO1).